The sequence spans 236 residues: Octanoyltransferase (236 aa).

Residues 36 to 220 form the BPL/LPL catalytic domain; the sequence is DQVPDTVLLL…HLAAVLGASS (185 aa). Substrate-binding positions include 76–83, 150–152, and 163–165; these read RGGKITWH, AIG, and GFA. Cysteine 181 serves as the catalytic Acyl-thioester intermediate.

Belongs to the LipB family.

The protein resides in the cytoplasm. It catalyses the reaction octanoyl-[ACP] + L-lysyl-[protein] = N(6)-octanoyl-L-lysyl-[protein] + holo-[ACP] + H(+). Its pathway is protein modification; protein lipoylation via endogenous pathway; protein N(6)-(lipoyl)lysine from octanoyl-[acyl-carrier-protein]: step 1/2. In terms of biological role, catalyzes the transfer of endogenously produced octanoic acid from octanoyl-acyl-carrier-protein onto the lipoyl domains of lipoate-dependent enzymes. Lipoyl-ACP can also act as a substrate although octanoyl-ACP is likely to be the physiological substrate. In Thermobifida fusca (strain YX), this protein is Octanoyltransferase.